The following is a 500-amino-acid chain: Na(+)/H(+) antiporter NhaB (500 aa).

The next 12 helical transmembrane spans lie at 28–50, 68–88, 98–118, 121–141, 145–165, 205–225, 244–264, 311–331, 350–370, 394–414, 449–469, and 477–497; these read FLLL…VLVG, GGLL…ALYA, LLLM…LLLF, LLLG…LAAL, FLDA…FFAV, LLMH…VGEP, QVAP…VLLE, VLIV…LLVI, FQEA…VAVI, MLFI…VATI, VATP…IAPL, and MVWM…WAVS.

This sequence belongs to the NhaB Na(+)/H(+) (TC 2.A.34) antiporter family.

It localises to the cell inner membrane. It catalyses the reaction 2 Na(+)(in) + 3 H(+)(out) = 2 Na(+)(out) + 3 H(+)(in). Functionally, na(+)/H(+) antiporter that extrudes sodium in exchange for external protons. The protein is Na(+)/H(+) antiporter NhaB of Pseudomonas aeruginosa (strain LESB58).